An 835-amino-acid chain; its full sequence is Axin-1 (835 aa).

The tract at residues L16 to A60 is disordered. Residues D40 to S53 are compositionally biased toward polar residues. The 123-residue stretch at S92–T214 folds into the RGS domain. Residues A318–Y349 are disordered. Residues S328–D344 show a composition bias toward low complexity. The tract at residues Y351–L436 is interaction with GSK3B. The segment at A437 to I512 is interaction with beta-catenin. Disordered stretches follow at residues K485 to Q530 and G602 to R627. Over residues R616–R627 the composition is skewed to basic and acidic residues. In terms of domain architecture, DIX spans C753 to D835.

Homodimer. Interacts with dixdc1. Interacts with hwa; leading to promote the tankyrase-mediated degradation of axin1. Post-translationally, ADP-ribosylated by tankyrase tnks and tnks2. Poly-ADP-ribosylated protein is recognized by rnf146, followed by ubiquitination at 'Lys-48' and subsequent activation of the Wnt signaling pathway. In terms of processing, ubiquitinated by rnf146 when poly-ADP-ribosylated, leading to its degradation and subsequent activation of the Wnt signaling pathway.

Its subcellular location is the cytoplasm. The protein localises to the nucleus. The protein resides in the membrane. It is found in the cell membrane. Component of the beta-catenin destruction complex required for regulating ctnnb1 levels through phosphorylation and ubiquitination, and modulating Wnt-signaling. Controls dorsoventral patterning via two opposing effects: down-regulates ctnnb1 to inhibit the Wnt signaling pathway and ventralize embryos, but also dorsalizes embryos by activating a Wnt-independent JNK signaling pathway. This is Axin-1 (axin1) from Danio rerio (Zebrafish).